Consider the following 204-residue polypeptide: Probable UMP-CMP kinase 1 (204 aa).

G31–T36 provides a ligand contact to ATP. The NMP stretch occupies residues S51–V80. A ribonucleoside 5'-phosphate-binding positions include R57, R78–V80, and G105–R108. CMP is bound at residue N112. The LID stretch occupies residues S143–D151. R144 is a binding site for ATP. A ribonucleoside 5'-phosphate is bound by residues R148 and R159. K187 serves as a coordination point for ATP.

This sequence belongs to the adenylate kinase family. UMP-CMP kinase subfamily. Monomer. Mg(2+) serves as cofactor.

The protein localises to the cytoplasm. It is found in the nucleus. The enzyme catalyses CMP + ATP = CDP + ADP. The catalysed reaction is dCMP + ATP = dCDP + ADP. It catalyses the reaction UMP + ATP = UDP + ADP. In terms of biological role, catalyzes the phosphorylation of pyrimidine nucleoside monophosphates at the expense of ATP. Plays an important role in de novo pyrimidine nucleotide biosynthesis. Has preference for UMP and CMP as phosphate acceptors. The polypeptide is Probable UMP-CMP kinase 1 (UMK1) (Arabidopsis thaliana (Mouse-ear cress)).